The primary structure comprises 20 residues: Thylakoid lumenal 14.7 kDa protein (20 aa).

Residues 1 to 20 (KTGVNKPELLPKEETTVIDV) are disordered. Over residues 9–20 (LLPKEETTVIDV) the composition is skewed to basic and acidic residues.

It localises to the plastid. The protein resides in the chloroplast thylakoid lumen. This Spinacia oleracea (Spinach) protein is Thylakoid lumenal 14.7 kDa protein.